Consider the following 139-residue polypeptide: D-ribose pyranase (139 aa).

The active-site Proton donor is the His20. Substrate contacts are provided by residues Asp28, His106, and 128-130 (FAN).

Belongs to the RbsD / FucU family. RbsD subfamily. As to quaternary structure, homodecamer.

The protein resides in the cytoplasm. The catalysed reaction is beta-D-ribopyranose = beta-D-ribofuranose. It participates in carbohydrate metabolism; D-ribose degradation; D-ribose 5-phosphate from beta-D-ribopyranose: step 1/2. Its function is as follows. Catalyzes the interconversion of beta-pyran and beta-furan forms of D-ribose. This chain is D-ribose pyranase, found in Yersinia pseudotuberculosis serotype O:1b (strain IP 31758).